The sequence spans 401 residues: Short chain dehydrogenase/reductase dpchH (401 aa).

N16 carries an N-linked (GlcNAc...) asparagine glycan. A helical membrane pass occupies residues 51–71 (VRAVDVLFGTFLYVPLGILFL). NAD(+)-binding positions include 72–80 (KKSLSGFGD), 99–100 (TG), and 118–120 (AKV). Residue N242 is glycosylated (N-linked (GlcNAc...) asparagine). The active-site Proton acceptor is the Y275. NAD(+) is bound by residues 275–279 (YGTSK) and 308–310 (GTI). Residue N386 is glycosylated (N-linked (GlcNAc...) asparagine).

The protein resides in the membrane. Its pathway is secondary metabolite biosynthesis; terpenoid biosynthesis. Functionally, short chain dehydrogenase/reductase; part of the gene cluster that mediates the biosynthesis of the diterpenoid pyrones higginsianins A and B. The first step of the pathway is the synthesis of the alpha-pyrone moiety by the polyketide synthase dpchA via condensation of one acetyl-CoA starter unit with 3 malonyl-CoA units and 2 methylations. The alpha-pyrone is then combined with geranylgeranyl pyrophosphate (GGPP) formed by the GGPP synthase dpchD through the action of the prenyltransferase dpchC to yield a linear alpha-pyrone diterpenoid. Subsequent steps in the diterpenoid pyrone biosynthetic pathway involve the decalin core formation, which is initiated by the epoxidation of the C10-C11 olefin by the FAD-dependent oxidoreductase dpchE, and is followed by a cyclization cascade catalyzed by the terpene cyclase dpchB. The short chain dehydrogenase/reductase dpchG then oxidizes the 8S hydroxy group to a ketone and the short chain dehydrogenase/reductase dpchH reduces the ketone to the 8R hydroxy group to yield higginsianin B. Finally, the FAD-dependent oxidoreductase dpchF converts higginsianin B into higginsianin A. In Colletotrichum higginsianum (strain IMI 349063) (Crucifer anthracnose fungus), this protein is Short chain dehydrogenase/reductase dpchH.